A 121-amino-acid chain; its full sequence is Alpha-endosulfine (121 aa).

A disordered region spans residues 1-53; it reads MSQKQEEENPAEETGEEKQDTQEKEGILPEKAEEAKLKAKYPSLGQKPGGSDF. The residue at position 2 (Ser2) is an N-acetylserine. Ser2 carries the phosphoserine modification. Over residues 16–37 the composition is skewed to basic and acidic residues; it reads EEKQDTQEKEGILPEKAEEAKL. A Phosphothreonine modification is found at Thr21. At Ser43 the chain carries Phosphoserine. A Phosphoserine; by GWL modification is found at Ser67. Residues 79-121 form a disordered region; sequence NKQLPSAGPDKNLVTGDHIPTPQDLPQRKSSLVTSKLAGGQVE. Position 109 is a phosphoserine; by PKA (Ser109).

It belongs to the endosulfine family. Interacts (when phosphorylated at Ser-67) with PPP2R2D. Interacts with ABCC8. Interacts with SNCA; interaction is disrupted when phosphorylated at Ser-109. Post-translationally, phosphorylation at Ser-67 by GWL during mitosis is essential for interaction with PPP2R2D (PR55-delta) and subsequent inactivation of PP2A. Phosphorylated by PKA.

It localises to the cytoplasm. Functionally, protein phosphatase inhibitor that specifically inhibits protein phosphatase 2A (PP2A) during mitosis. When phosphorylated at Ser-67 during mitosis, specifically interacts with PPP2R2D (PR55-delta) and inhibits its activity, leading to inactivation of PP2A, an essential condition to keep cyclin-B1-CDK1 activity high during M phase. Also acts as a stimulator of insulin secretion by interacting with sulfonylurea receptor (ABCC8), thereby preventing sulfonylurea from binding to its receptor and reducing K(ATP) channel currents. The protein is Alpha-endosulfine (ENSA) of Bos taurus (Bovine).